The chain runs to 234 residues: Leucyl/phenylalanyl-tRNA--protein transferase (234 aa).

The protein belongs to the L/F-transferase family.

It is found in the cytoplasm. It catalyses the reaction N-terminal L-lysyl-[protein] + L-leucyl-tRNA(Leu) = N-terminal L-leucyl-L-lysyl-[protein] + tRNA(Leu) + H(+). The catalysed reaction is N-terminal L-arginyl-[protein] + L-leucyl-tRNA(Leu) = N-terminal L-leucyl-L-arginyl-[protein] + tRNA(Leu) + H(+). The enzyme catalyses L-phenylalanyl-tRNA(Phe) + an N-terminal L-alpha-aminoacyl-[protein] = an N-terminal L-phenylalanyl-L-alpha-aminoacyl-[protein] + tRNA(Phe). Functions in the N-end rule pathway of protein degradation where it conjugates Leu, Phe and, less efficiently, Met from aminoacyl-tRNAs to the N-termini of proteins containing an N-terminal arginine or lysine. This is Leucyl/phenylalanyl-tRNA--protein transferase from Salmonella agona (strain SL483).